We begin with the raw amino-acid sequence, 399 residues long: MYAYPNELGRYGEFGGKFVPETLMQPLKEIEQAFNELKEDPAFEQEYLSLLHNYSGRPTALTYADQLSAYLGGAKIYLKREDLNHTGAHKINNALGQALLAKKMGKSNIIAETGAGQHGVAAATVAAKFGLSCTVFMGKEDVERQSLNVFRMKLLGAEVIPVTSGNGTLKDATNEAIRYWVQHCSDHFYMIGSVVGPHPYPQIVSEFQRMIGDEAKEQMLKKEGRLPHKVIACVGGGSNAIGMYRAFLDDEVDLIGVEAAGKGIDTPLHAATITKGTKGVIHGSLTYLIQDEFGQIIEPYSISAGLDYPGIGPEHAYLHASGRVQYVSATDQEALDALKLLTEKEGILPAIESAHALAKAFEMSRTMSEDEIILVCLSGRGDKDVHTLMNVLESEGKTK.

K90 is modified (N6-(pyridoxal phosphate)lysine).

It belongs to the TrpB family. Tetramer of two alpha and two beta chains. Requires pyridoxal 5'-phosphate as cofactor.

It catalyses the reaction (1S,2R)-1-C-(indol-3-yl)glycerol 3-phosphate + L-serine = D-glyceraldehyde 3-phosphate + L-tryptophan + H2O. It functions in the pathway amino-acid biosynthesis; L-tryptophan biosynthesis; L-tryptophan from chorismate: step 5/5. The beta subunit is responsible for the synthesis of L-tryptophan from indole and L-serine. This is Tryptophan synthase beta chain from Bacillus pumilus (strain SAFR-032).